The sequence spans 217 residues: Variable small protein 22 (217 aa).

A signal peptide spans 1–18 (MRKRISAIIMTLFMVFMS). Cysteine 19 carries the N-palmitoyl cysteine lipid modification. Cysteine 19 carries S-diacylglycerol cysteine lipidation. The tract at residues 151–174 (LGKNDASDDDTKKAIKKDNSDKTK) is disordered. Residues 155 to 174 (DASDDDTKKAIKKDNSDKTK) show a composition bias toward basic and acidic residues.

Belongs to the variable small protein (Vsp) family.

The protein localises to the cell outer membrane. Its function is as follows. The Vlp and Vsp proteins are antigenically distinct proteins, only one vlp or vsp gene is transcriptionally active at any one time. Switching between these genes is a mechanism of host immune response evasion. This chain is Variable small protein 22, found in Borrelia hermsii.